A 118-amino-acid chain; its full sequence is 5-hydroxyisourate hydrolase (118 aa).

Substrate is bound by residues His7, Arg46, and Tyr115.

Belongs to the transthyretin family. 5-hydroxyisourate hydrolase subfamily. As to quaternary structure, homotetramer.

It carries out the reaction 5-hydroxyisourate + H2O = 5-hydroxy-2-oxo-4-ureido-2,5-dihydro-1H-imidazole-5-carboxylate + H(+). Functionally, catalyzes the hydrolysis of 5-hydroxyisourate (HIU) to 2-oxo-4-hydroxy-4-carboxy-5-ureidoimidazoline (OHCU). This chain is 5-hydroxyisourate hydrolase, found in Brucella suis biovar 1 (strain 1330).